The following is a 227-amino-acid chain: Ribosomal RNA large subunit methyltransferase E (227 aa).

S-adenosyl-L-methionine contacts are provided by Gly-78, Trp-80, Asp-103, Asp-119, and Asp-143. The active-site Proton acceptor is Lys-183.

The protein belongs to the class I-like SAM-binding methyltransferase superfamily. RNA methyltransferase RlmE family.

Its subcellular location is the cytoplasm. The catalysed reaction is uridine(2552) in 23S rRNA + S-adenosyl-L-methionine = 2'-O-methyluridine(2552) in 23S rRNA + S-adenosyl-L-homocysteine + H(+). Functionally, specifically methylates the uridine in position 2552 of 23S rRNA at the 2'-O position of the ribose in the fully assembled 50S ribosomal subunit. The sequence is that of Ribosomal RNA large subunit methyltransferase E from Rickettsia typhi (strain ATCC VR-144 / Wilmington).